A 151-amino-acid polypeptide reads, in one-letter code: Deazaflavin-dependent nitroreductase (151 aa).

Coenzyme F420-(gamma-Glu)n-binding positions include 54 to 56, 60 to 65, 76 to 79, 87 to 91, and Y133; these read RKT, RVNPLY, AASK, and MWYLN.

The protein belongs to the F420H(2)-dependent quinone reductase family.

Its subcellular location is the cell membrane. It catalyses the reaction oxidized coenzyme F420-(gamma-L-Glu)(n) + a quinol + H(+) = reduced coenzyme F420-(gamma-L-Glu)(n) + a quinone. Its function is as follows. Involved in a F420-dependent anti-oxidant mechanism that protects M.tuberculosis against oxidative stress and bactericidal agents. Catalyzes the F420H(2)-dependent two-electron reduction of quinones to dihydroquinones, thereby preventing the formation of cytotoxic semiquinones obtained by the one-electron reduction pathway. In vitro, catalyzes the reduction of both benzoquinone and naphthoquinone analogs; since menaquinone is the sole quinone electron carrier in the respiratory chain in M.tuberculosis, the physiological electron acceptor for Fqr-mediated F420H(2) oxidation is therefore likely to be the endogenous menaquinone found in the membrane fraction of M.tuberculosis. Is able to use F420 species with two and five glutamate residues in its polyglutamate tail. Cannot use NADH or NADPH instead of F420H(2) as the electron donor. In terms of biological role, is involved in the bioreductive activation of bicyclic 4-nitroimidazole prodrugs such as PA-824 and delamanid developed for anti-tuberculosis therapy against both replicating and persistent bacteria. It converts PA-824 into three primary metabolites resulting from reduction of the imidazole ring at C-3; the major one is the corresponding des-nitroimidazole that generates lethal reactive nitrogen species, including nitric oxide (NO), which appears to be responsible for the anaerobic killing activity. Ddn uses the reduced F420 produced by FGD1 to activate PA-824. Delamanid (OPC-67683) is also reduced by Ddn to its des-nitro form. In Mycobacterium tuberculosis (strain CDC 1551 / Oshkosh), this protein is Deazaflavin-dependent nitroreductase (ddn).